Reading from the N-terminus, the 367-residue chain is Aminomethyltransferase (367 aa).

It belongs to the GcvT family. In terms of assembly, the glycine cleavage system is composed of four proteins: P, T, L and H.

The enzyme catalyses N(6)-[(R)-S(8)-aminomethyldihydrolipoyl]-L-lysyl-[protein] + (6S)-5,6,7,8-tetrahydrofolate = N(6)-[(R)-dihydrolipoyl]-L-lysyl-[protein] + (6R)-5,10-methylene-5,6,7,8-tetrahydrofolate + NH4(+). The glycine cleavage system catalyzes the degradation of glycine. This chain is Aminomethyltransferase, found in Shouchella clausii (strain KSM-K16) (Alkalihalobacillus clausii).